The sequence spans 905 residues: Transcriptional regulator MNL1 (905 aa).

A compositionally biased stretch (polar residues) spans 1–29 (MDSHNNIDQSVSELLSDPASVQQSYNSQL). Disordered stretches follow at residues 1–34 (MDSH…GPEF), 312–340 (QTQA…ASHT), 383–419 (MDQV…NARY), 434–460 (SEKN…NLLS), 525–544 (TKEE…KPKR), 584–613 (NISS…SESS), 625–671 (NVGK…GTVE), and 685–733 (PASE…TSST). Residues 312–334 (QTQAQAQAHQQQQQQSQQQHSPQ) are compositionally biased toward low complexity. Positions 439–460 (NHNNRSPPTPPTSTSSPQNLLS) are enriched in low complexity. The span at 584–598 (NISSHHSSGTPSITT) shows a compositional bias: polar residues. Residues 628–639 (KRKNKSYRKPKG) show a composition bias toward basic residues. 2 stretches are compositionally biased toward low complexity: residues 647–669 (QQQQ…STGT) and 690–710 (SSLL…EASS). C2H2-type zinc fingers lie at residues 832 to 855 (YLCN…RSLH) and 861 to 883 (YNCD…LKIH). A disordered region spans residues 885–905 (QEDEKDCADAETGVGMDDASG).

Its subcellular location is the nucleus. Functionally, transcription factor that activates stress response genes via SLE (STRE-like) elements. Required for adaptation to weak acid stress such as acetic acid stress, but seems not involved in the response to heat, osmotic, ethanol, nutrient, oxidative, or heavy-metal stress. Activates a subset of the genes that are repressed by NRG1. This is Transcriptional regulator MNL1 (MNL1) from Candida albicans (strain SC5314 / ATCC MYA-2876) (Yeast).